The following is a 436-amino-acid chain: Adenylosuccinate synthetase (436 aa).

Residues 12-18 and 40-42 each bind GTP; these read GDEGKGK and GHT. Residue Asp13 is the Proton acceptor of the active site. The Mg(2+) site is built by Asp13 and Gly40. Residues 13–16, 38–41, Thr130, Arg144, Gln230, Thr245, and Arg309 contribute to the IMP site; these read DEGK and NAGH. The Proton donor role is filled by His41. Residue 305–311 participates in substrate binding; sequence TTTGRPR. Residues Arg311, 337 to 339, and 419 to 421 each bind GTP; these read KLD and SVG.

This sequence belongs to the adenylosuccinate synthetase family. As to quaternary structure, homodimer. Mg(2+) is required as a cofactor.

Its subcellular location is the cytoplasm. The catalysed reaction is IMP + L-aspartate + GTP = N(6)-(1,2-dicarboxyethyl)-AMP + GDP + phosphate + 2 H(+). It functions in the pathway purine metabolism; AMP biosynthesis via de novo pathway; AMP from IMP: step 1/2. Its function is as follows. Plays an important role in the de novo pathway of purine nucleotide biosynthesis. Catalyzes the first committed step in the biosynthesis of AMP from IMP. The protein is Adenylosuccinate synthetase of Myxococcus xanthus (strain DK1622).